The sequence spans 193 residues: Putative 3-methyladenine DNA glycosylase (193 aa).

It belongs to the DNA glycosylase MPG family.

The chain is Putative 3-methyladenine DNA glycosylase from Francisella tularensis subsp. holarctica (strain FTNF002-00 / FTA).